A 214-amino-acid chain; its full sequence is Probable transaldolase (214 aa).

Lys-83 (schiff-base intermediate with substrate) is an active-site residue.

Belongs to the transaldolase family. Type 3B subfamily.

It localises to the cytoplasm. The catalysed reaction is D-sedoheptulose 7-phosphate + D-glyceraldehyde 3-phosphate = D-erythrose 4-phosphate + beta-D-fructose 6-phosphate. The protein operates within carbohydrate degradation; pentose phosphate pathway; D-glyceraldehyde 3-phosphate and beta-D-fructose 6-phosphate from D-ribose 5-phosphate and D-xylulose 5-phosphate (non-oxidative stage): step 2/3. Transaldolase is important for the balance of metabolites in the pentose-phosphate pathway. This chain is Probable transaldolase, found in Streptococcus pyogenes serotype M2 (strain MGAS10270).